A 250-amino-acid polypeptide reads, in one-letter code: Small ribosomal subunit protein uS2 (250 aa).

This sequence belongs to the universal ribosomal protein uS2 family.

This chain is Small ribosomal subunit protein uS2, found in Teredinibacter turnerae (strain ATCC 39867 / T7901).